The primary structure comprises 235 residues: Ornithine decarboxylase antizyme 3 (235 aa).

2 positions are modified to phosphoserine: Ser9 and Ser12.

The protein belongs to the ODC antizyme family. As to quaternary structure, interacts with ODC1 and thereby sterically blocks ODC homodimerization. Interacts with AZIN2; this interaction disrupts the interaction between the antizyme and ODC1. Interacts with GGN. In terms of tissue distribution, testis specific.

The protein localises to the nucleus. It is found in the cytoplasm. Ornithine decarboxylase (ODC) antizyme protein that negatively regulates ODC activity and intracellular polyamine biosynthesis and uptake in response to increased intracellular polyamine levels. Binds to ODC monomers, inhibiting the assembly of the functional ODC homodimers. Does not target the ODC monomers for degradation, which allows a protein synthesis-independent restoration of ODC activity. Stabilizes AZIN2 by interfering with its ubiquitination. Involved in the translocation of AZNI2 from ER-Golgi intermediate compartment (ERGIC) to the cytosol. Probably plays a key role in spermatogenesis by regulating the intracellular concentration of polyamines in haploid germ cells. The protein is Ornithine decarboxylase antizyme 3 (OAZ3) of Homo sapiens (Human).